The chain runs to 478 residues: Light-independent protochlorophyllide reductase subunit N (478 aa).

Residues cysteine 22, cysteine 47, and cysteine 107 each coordinate [4Fe-4S] cluster.

It belongs to the BchN/ChlN family. Protochlorophyllide reductase is composed of three subunits; ChlL, ChlN and ChlB. Forms a heterotetramer of two ChlB and two ChlN subunits. The cofactor is [4Fe-4S] cluster.

Its subcellular location is the plastid. The protein resides in the chloroplast. It catalyses the reaction chlorophyllide a + oxidized 2[4Fe-4S]-[ferredoxin] + 2 ADP + 2 phosphate = protochlorophyllide a + reduced 2[4Fe-4S]-[ferredoxin] + 2 ATP + 2 H2O. It functions in the pathway porphyrin-containing compound metabolism; chlorophyll biosynthesis (light-independent). In terms of biological role, component of the dark-operative protochlorophyllide reductase (DPOR) that uses Mg-ATP and reduced ferredoxin to reduce ring D of protochlorophyllide (Pchlide) to form chlorophyllide a (Chlide). This reaction is light-independent. The NB-protein (ChlN-ChlB) is the catalytic component of the complex. This chain is Light-independent protochlorophyllide reductase subunit N, found in Chlorokybus atmophyticus (Soil alga).